A 511-amino-acid polypeptide reads, in one-letter code: Phosphoenolpyruvate carboxylase (511 aa).

The protein belongs to the PEPCase type 2 family. In terms of assembly, homotetramer. It depends on Mg(2+) as a cofactor.

It catalyses the reaction oxaloacetate + phosphate = phosphoenolpyruvate + hydrogencarbonate. Catalyzes the irreversible beta-carboxylation of phosphoenolpyruvate (PEP) to form oxaloacetate (OAA), a four-carbon dicarboxylic acid source for the tricarboxylic acid cycle. The chain is Phosphoenolpyruvate carboxylase from Saccharolobus islandicus (strain Y.G.57.14 / Yellowstone #1) (Sulfolobus islandicus).